We begin with the raw amino-acid sequence, 367 residues long: Phosphoribosylaminoimidazole-succinocarboxamide synthase (367 aa).

Belongs to the SAICAR synthetase family.

It catalyses the reaction 5-amino-1-(5-phospho-D-ribosyl)imidazole-4-carboxylate + L-aspartate + ATP = (2S)-2-[5-amino-1-(5-phospho-beta-D-ribosyl)imidazole-4-carboxamido]succinate + ADP + phosphate + 2 H(+). Its pathway is purine metabolism; IMP biosynthesis via de novo pathway; 5-amino-1-(5-phospho-D-ribosyl)imidazole-4-carboxamide from 5-amino-1-(5-phospho-D-ribosyl)imidazole-4-carboxylate: step 1/2. The sequence is that of Phosphoribosylaminoimidazole-succinocarboxamide synthase from Vibrio atlanticus (strain LGP32) (Vibrio splendidus (strain Mel32)).